The primary structure comprises 429 residues: 5-methylthioadenosine/S-adenosylhomocysteine deaminase (429 aa).

The Zn(2+) site is built by H66 and H68. Residues E95, R147, R158, and H181 each coordinate substrate. Residue H208 participates in Zn(2+) binding. The substrate site is built by E211 and D296. A Zn(2+)-binding site is contributed by D296.

This sequence belongs to the metallo-dependent hydrolases superfamily. MTA/SAH deaminase family. It depends on Zn(2+) as a cofactor.

The catalysed reaction is S-adenosyl-L-homocysteine + H2O + H(+) = S-inosyl-L-homocysteine + NH4(+). It carries out the reaction S-methyl-5'-thioadenosine + H2O + H(+) = S-methyl-5'-thioinosine + NH4(+). In terms of biological role, catalyzes the deamination of 5-methylthioadenosine and S-adenosyl-L-homocysteine into 5-methylthioinosine and S-inosyl-L-homocysteine, respectively. Is also able to deaminate adenosine. The sequence is that of 5-methylthioadenosine/S-adenosylhomocysteine deaminase from Caldicellulosiruptor saccharolyticus (strain ATCC 43494 / DSM 8903 / Tp8T 6331).